A 507-amino-acid polypeptide reads, in one-letter code: Maturase K (507 aa).

This sequence belongs to the intron maturase 2 family. MatK subfamily.

The protein localises to the plastid. Its subcellular location is the chloroplast. Its function is as follows. Usually encoded in the trnK tRNA gene intron. Probably assists in splicing its own and other chloroplast group II introns. The sequence is that of Maturase K from Ranunculus repens (Creeping buttercup).